Consider the following 468-residue polypeptide: Ribulose bisphosphate carboxylase large chain (468 aa).

K7 carries the N6,N6,N6-trimethyllysine modification. Substrate is bound by residues N116 and T166. The active-site Proton acceptor is the K168. K170 provides a ligand contact to substrate. Residues K194, D196, and E197 each coordinate Mg(2+). An N6-carboxylysine modification is found at K194. H287 serves as the catalytic Proton acceptor. Residues R288, H320, and S372 each coordinate substrate.

This sequence belongs to the RuBisCO large chain family. Type I subfamily. In terms of assembly, heterohexadecamer of 8 large chains and 8 small chains; disulfide-linked. The disulfide link is formed within the large subunit homodimers. Mg(2+) serves as cofactor. In terms of processing, the disulfide bond which can form in the large chain dimeric partners within the hexadecamer appears to be associated with oxidative stress and protein turnover.

It localises to the plastid. Its subcellular location is the chloroplast. It catalyses the reaction 2 (2R)-3-phosphoglycerate + 2 H(+) = D-ribulose 1,5-bisphosphate + CO2 + H2O. It carries out the reaction D-ribulose 1,5-bisphosphate + O2 = 2-phosphoglycolate + (2R)-3-phosphoglycerate + 2 H(+). Functionally, ruBisCO catalyzes two reactions: the carboxylation of D-ribulose 1,5-bisphosphate, the primary event in carbon dioxide fixation, as well as the oxidative fragmentation of the pentose substrate in the photorespiration process. Both reactions occur simultaneously and in competition at the same active site. The protein is Ribulose bisphosphate carboxylase large chain of Cornus alternifolia (Pagoda dogwood).